Here is a 231-residue protein sequence, read N- to C-terminus: Phosphatidylserine decarboxylase proenzyme (231 aa).

Serine 188 acts as the Schiff-base intermediate with substrate; via pyruvic acid in catalysis. The residue at position 188 (serine 188) is a Pyruvic acid (Ser); by autocatalysis.

It belongs to the phosphatidylserine decarboxylase family. PSD-A subfamily. Heterodimer of a large membrane-associated beta subunit and a small pyruvoyl-containing alpha subunit. It depends on pyruvate as a cofactor. Post-translationally, is synthesized initially as an inactive proenzyme. Formation of the active enzyme involves a self-maturation process in which the active site pyruvoyl group is generated from an internal serine residue via an autocatalytic post-translational modification. Two non-identical subunits are generated from the proenzyme in this reaction, and the pyruvate is formed at the N-terminus of the alpha chain, which is derived from the carboxyl end of the proenzyme. The post-translation cleavage follows an unusual pathway, termed non-hydrolytic serinolysis, in which the side chain hydroxyl group of the serine supplies its oxygen atom to form the C-terminus of the beta chain, while the remainder of the serine residue undergoes an oxidative deamination to produce ammonia and the pyruvoyl prosthetic group on the alpha chain.

It localises to the cell membrane. The catalysed reaction is a 1,2-diacyl-sn-glycero-3-phospho-L-serine + H(+) = a 1,2-diacyl-sn-glycero-3-phosphoethanolamine + CO2. The protein operates within phospholipid metabolism; phosphatidylethanolamine biosynthesis; phosphatidylethanolamine from CDP-diacylglycerol: step 2/2. Its function is as follows. Catalyzes the formation of phosphatidylethanolamine (PtdEtn) from phosphatidylserine (PtdSer). This chain is Phosphatidylserine decarboxylase proenzyme, found in Rickettsia akari (strain Hartford).